The chain runs to 62 residues: Photosystem II reaction center protein Z (62 aa).

2 helical membrane-spanning segments follow: residues 8 to 28 (AVFALIVTSFLLVIGVPVVLA) and 41 to 61 (FSGASLWIGLVFLVGILNSFV).

Belongs to the PsbZ family. As to quaternary structure, PSII is composed of 1 copy each of membrane proteins PsbA, PsbB, PsbC, PsbD, PsbE, PsbF, PsbH, PsbI, PsbJ, PsbK, PsbL, PsbM, PsbT, PsbY, PsbZ, Psb30/Ycf12, at least 3 peripheral proteins of the oxygen-evolving complex and a large number of cofactors. It forms dimeric complexes.

The protein localises to the plastid. It is found in the chloroplast thylakoid membrane. In terms of biological role, may control the interaction of photosystem II (PSII) cores with the light-harvesting antenna, regulates electron flow through the 2 photosystem reaction centers. PSII is a light-driven water plastoquinone oxidoreductase, using light energy to abstract electrons from H(2)O, generating a proton gradient subsequently used for ATP formation. This is Photosystem II reaction center protein Z from Zygnema circumcarinatum (Green alga).